Reading from the N-terminus, the 191-residue chain is dTTP/UTP pyrophosphatase (191 aa).

The active-site Proton acceptor is the Asp-68.

Belongs to the Maf family. YhdE subfamily. A divalent metal cation is required as a cofactor.

It localises to the cytoplasm. The catalysed reaction is dTTP + H2O = dTMP + diphosphate + H(+). It catalyses the reaction UTP + H2O = UMP + diphosphate + H(+). In terms of biological role, nucleoside triphosphate pyrophosphatase that hydrolyzes dTTP and UTP. May have a dual role in cell division arrest and in preventing the incorporation of modified nucleotides into cellular nucleic acids. In Thermoanaerobacter pseudethanolicus (strain ATCC 33223 / 39E) (Clostridium thermohydrosulfuricum), this protein is dTTP/UTP pyrophosphatase.